The primary structure comprises 322 residues: uncharacterized protein (322 aa).

This sequence to M.jannaschii MJ0640 and MJ0799.

This is an uncharacterized protein from Synechocystis sp. (strain ATCC 27184 / PCC 6803 / Kazusa).